Reading from the N-terminus, the 249-residue chain is Large ribosomal subunit protein uL10m (249 aa).

The N-terminal 31 residues, 1 to 31, are a transit peptide targeting the mitochondrion; it reads MLQLRFMPGWVPRNGFFGLKETIGTVHKRFY. The disordered stretch occupies residues 226–249; sequence SHNDNQKPKEDVESTTDAESKGSK.

This sequence belongs to the universal ribosomal protein uL10 family. Component of the mitochondrial large ribosomal subunit (mt-LSU). Mature yeast 74S mitochondrial ribosomes consist of a small (37S) and a large (54S) subunit. The 37S small subunit contains a 15S ribosomal RNA (15S mt-rRNA) and 34 different proteins. The 54S large subunit contains a 21S rRNA (21S mt-rRNA) and 46 different proteins.

It localises to the mitochondrion. Its function is as follows. Component of the mitochondrial ribosome (mitoribosome), a dedicated translation machinery responsible for the synthesis of mitochondrial genome-encoded proteins, including at least some of the essential transmembrane subunits of the mitochondrial respiratory chain. The mitoribosomes are attached to the mitochondrial inner membrane and translation products are cotranslationally integrated into the membrane. This chain is Large ribosomal subunit protein uL10m (MRPL11), found in Saccharomyces cerevisiae (strain ATCC 204508 / S288c) (Baker's yeast).